Consider the following 144-residue polypeptide: Large ribosomal subunit protein uL16 (144 aa).

Belongs to the universal ribosomal protein uL16 family. Part of the 50S ribosomal subunit.

In terms of biological role, binds 23S rRNA and is also seen to make contacts with the A and possibly P site tRNAs. This is Large ribosomal subunit protein uL16 from Bacillus licheniformis (strain ATCC 14580 / DSM 13 / JCM 2505 / CCUG 7422 / NBRC 12200 / NCIMB 9375 / NCTC 10341 / NRRL NRS-1264 / Gibson 46).